The sequence spans 53 residues: Lantibiotic mutacin-2 (53 aa).

Positions Met-1–Gly-26 are excised as a propeptide. The beta-methyllanthionine (Thr-Cys) cross-link spans Thr-36–Cys-41. 2 consecutive cross-links (lanthionine (Ser-Cys)) follow at residues Ser-38–Cys-52 and Ser-45–Cys-53. Thr-51 is modified (2,3-didehydrobutyrine).

Maturation of lantibiotics involves the enzymatic conversion of Thr, and Ser into dehydrated AA and the formation of thioether bonds with cysteine. This is followed by membrane translocation and cleavage of the modified precursor. In terms of processing, it is not established whether the 2,3-didehydrobutyrine is the E- or Z-isomer.

In terms of biological role, lanthionine-containing peptide antibiotic (lantibiotic) active on Gram-positive bacteria including M.luteus, S.aureus, Streptococcus, P.micros, P.acidilactici, C.sporogenes, C.diphtheriae, A.viscosus, G.vaginalis, P.acnes, L.monocytogenes and M.smegmatis, and Gram-negative bacteria including C.jejuni, H.pylori and N.gonorrhoeae. Transiently and partially depolarizes the transmembrane electrical potential and pH gradient of susceptible cells, inhibits the uptake of amino acids and depletes the intracellular ATP pool. This Streptococcus mutans protein is Lantibiotic mutacin-2.